Here is a 235-residue protein sequence, read N- to C-terminus: MSFDQILLPGILRRRYQRFFADVALETGESIVAHCPNTGSMRGLAEPGLGVYVSRANNPRRKLAYTLELVDAHTSLVGVHTGRANILTKEAIAAGRISQLLGYGEIRQEVRYSKNSRIDLLLEDPSTQQCCYVEVKSVTLRQGDGAACFPDAVTTRGAKHLDDLAATVCSPRQRAVMFYLVQREDCRYFTPADDIDPRYGAKLRSAIEQGVEILAYACQVSSQGIQVTQSLPIHL.

Belongs to the SfsA family.

The protein is Sugar fermentation stimulation protein homolog of Nitrosococcus oceani (strain ATCC 19707 / BCRC 17464 / JCM 30415 / NCIMB 11848 / C-107).